The sequence spans 98 residues: DNA-binding protein Fis (98 aa).

Residues 74 to 93 (QTRAALMMGINRGTLRKKLK) constitute a DNA-binding region (H-T-H motif).

This sequence belongs to the transcriptional regulatory Fis family. As to quaternary structure, homodimer.

In terms of biological role, activates ribosomal RNA transcription. Plays a direct role in upstream activation of rRNA promoters. This is DNA-binding protein Fis from Citrobacter koseri (strain ATCC BAA-895 / CDC 4225-83 / SGSC4696).